The sequence spans 233 residues: Large ribosomal subunit protein uL1 (233 aa).

It belongs to the universal ribosomal protein uL1 family. Part of the 50S ribosomal subunit.

Binds directly to 23S rRNA. The L1 stalk is quite mobile in the ribosome, and is involved in E site tRNA release. Functionally, protein L1 is also a translational repressor protein, it controls the translation of the L11 operon by binding to its mRNA. The polypeptide is Large ribosomal subunit protein uL1 (Hamiltonella defensa subsp. Acyrthosiphon pisum (strain 5AT)).